Consider the following 544-residue polypeptide: Ribosomal oxygenase 1 (544 aa).

The segment at Met1 to Met78 is disordered. A compositionally biased stretch (polar residues) spans Ser10–Lys19. A compositionally biased stretch (basic residues) spans Pro42 to Lys53. A compositionally biased stretch (basic and acidic residues) spans Ser63–Met78. In terms of domain architecture, JmjC spans Cys197–Ala342. The Fe cation site is built by His243, Asp245, and His308.

The protein belongs to the ROX family. NO66 subfamily. It depends on Fe(2+) as a cofactor.

The protein resides in the nucleus. Its subcellular location is the nucleolus. It localises to the nucleoplasm. The enzyme catalyses N(6),N(6)-dimethyl-L-lysyl(36)-[histone H3] + 2 2-oxoglutarate + 2 O2 = L-lysyl(36)-[histone H3] + 2 formaldehyde + 2 succinate + 2 CO2. It carries out the reaction N(6)-methyl-L-lysyl-[protein] + 2-oxoglutarate + O2 = L-lysyl-[protein] + formaldehyde + succinate + CO2. The catalysed reaction is L-histidyl-[protein] + 2-oxoglutarate + O2 = (3S)-3-hydroxy-L-histidyl-[protein] + succinate + CO2. Oxygenase that can act as both a histone lysine demethylase and a ribosomal histidine hydroxylase. Specifically demethylates 'Lys-4' (H3K4me) and 'Lys-36' (H3K36me) of histone H3, thereby playing a central role in histone code. Preferentially demethylates trimethylated H3 'Lys-4' (H3K4me3) and monomethylated H3 'Lys-4' (H3K4me1) residues, while it has weaker activity for dimethylated H3 'Lys-36' (H3K36me2). Also catalyzes demethylation of non-histone proteins. Also catalyzes the hydroxylation of 60S ribosomal protein L8 on 'His-216', thereby playing a role in ribosome biogenesis. This chain is Ribosomal oxygenase 1 (riox1), found in Danio rerio (Zebrafish).